A 200-amino-acid polypeptide reads, in one-letter code: Phospholipase A2 inhibitor NAI (200 aa).

A signal peptide spans M1–C19. Cystine bridges form between C22–C46, C25–C32, C39–C67, C73–C94, C95–C100, C120–C145, C138–C165, and C171–C191.

Belongs to the CNF-like-inhibitor family. As to quaternary structure, heterotrimer of 2 subunits A and 1 subunit B; non-covalently linked. Expressed by the liver.

It is found in the secreted. In terms of biological role, inhibits the enzymatic activity of all phospholipase A2 tested, binding with micromole to nanomole affinity. The chain is Phospholipase A2 inhibitor NAI from Notechis ater (Black tiger snake).